The following is a 230-amino-acid chain: Probable cytokinin riboside 5'-monophosphate phosphoribohydrolase LOG4 (230 aa).

Substrate contacts are provided by residues glutamate 91, 109–110 (RK), and 126–132 (GYGTIEE).

The protein belongs to the LOG family.

It carries out the reaction N(6)-(dimethylallyl)adenosine 5'-phosphate + H2O = N(6)-dimethylallyladenine + D-ribose 5-phosphate. It catalyses the reaction 9-ribosyl-trans-zeatin 5'-phosphate + H2O = trans-zeatin + D-ribose 5-phosphate. Functionally, cytokinin-activating enzyme working in the direct activation pathway. Phosphoribohydrolase that converts inactive cytokinin nucleotides to the biologically active free-base forms. In Oryza sativa subsp. japonica (Rice), this protein is Probable cytokinin riboside 5'-monophosphate phosphoribohydrolase LOG4 (LOGL4).